Here is a 406-residue protein sequence, read N- to C-terminus: Protein phosphatase 2C (406 aa).

A PPM-type phosphatase domain is found at 23–274; that stretch reads RCGSNCVNGY…DNISCMIVQF (252 aa). Mn(2+)-binding residues include Asp55, Gly56, Asp221, and Asp265.

It belongs to the PP2C family. As to quaternary structure, monomer. Mg(2+) is required as a cofactor. Mn(2+) serves as cofactor.

It carries out the reaction O-phospho-L-seryl-[protein] + H2O = L-seryl-[protein] + phosphate. It catalyses the reaction O-phospho-L-threonyl-[protein] + H2O = L-threonyl-[protein] + phosphate. Its function is as follows. Enzyme with a broad specificity. The polypeptide is Protein phosphatase 2C (Leishmania chagasi).